We begin with the raw amino-acid sequence, 287 residues long: AA14 family lytic polysaccharide monooxygenase A (287 aa).

An N-terminal signal peptide occupies residues 1 to 18 (MLRILTLSILATSKLASA). Asparagine 33, asparagine 83, and asparagine 137 each carry an N-linked (GlcNAc...) asparagine glycan. 3 disulfides stabilise this stretch: cysteine 188–cysteine 193, cysteine 195–cysteine 216, and cysteine 236–cysteine 243. Asparagine 238 carries an N-linked (GlcNAc...) asparagine glycan.

This sequence belongs to the polysaccharide monooxygenase AA14 family. Cu(2+) is required as a cofactor.

It is found in the secreted. Lytic polysaccharide monooxygenase (LPMO) that has a broad substrate specificity with strong oxidative activity on pure amorphous cellulose and xyloglucan and plays as a bifunctional enzyme to decompose some specific network structures formed between cellulose and hemicellulose in the plant cell walls. Catalysis by LPMOs requires the reduction of the active-site copper from Cu(II) to Cu(I) by a reducing agent and H(2)O(2) or O(2) as a cosubstrate. Simultaneously oxidizes cellulose, xylan and xyloglucan in natural hemi/cellulosic substrate such as fibrillated eucalyptus pulp, and releases native and oxidized cello-oligosaccharides, xylo-oligosaccharides and xyloglucan oligosaccharides from this substrate. The cellulolytic/hemicellulolytic activity becomes weaker as the contents of xylan increase in the alkaline-extracted hemi/cellulosic substrates. This chain is AA14 family lytic polysaccharide monooxygenase A, found in Talaromyces rugulosus (Penicillium rugulosum).